The sequence spans 924 residues: LPS-assembly protein LptD (924 aa).

Positions 1-33 (MAVKSLVFRRKFPLLVTGSLLALQPVAALTVQA) are cleaved as a signal peptide. Residues 58–102 (NLPPRPAHTATSVSTAAAGSSVSGSGGETVEAEPTQRLVTESGGR) form a disordered region. A compositionally biased stretch (low complexity) spans 66-90 (TATSVSTAAAGSSVSGSGGETVEAE).

Belongs to the LptD family. Component of the lipopolysaccharide transport and assembly complex. Interacts with LptE and LptA.

It is found in the cell outer membrane. In terms of biological role, together with LptE, is involved in the assembly of lipopolysaccharide (LPS) at the surface of the outer membrane. The chain is LPS-assembly protein LptD from Pseudomonas aeruginosa (strain UCBPP-PA14).